A 607-amino-acid polypeptide reads, in one-letter code: Elongation factor 4 (607 aa).

In terms of domain architecture, tr-type G spans S6–R188. GTP contacts are provided by residues D18 to T23 and N135 to D138.

Belongs to the TRAFAC class translation factor GTPase superfamily. Classic translation factor GTPase family. LepA subfamily.

It localises to the cell inner membrane. The enzyme catalyses GTP + H2O = GDP + phosphate + H(+). In terms of biological role, required for accurate and efficient protein synthesis under certain stress conditions. May act as a fidelity factor of the translation reaction, by catalyzing a one-codon backward translocation of tRNAs on improperly translocated ribosomes. Back-translocation proceeds from a post-translocation (POST) complex to a pre-translocation (PRE) complex, thus giving elongation factor G a second chance to translocate the tRNAs correctly. Binds to ribosomes in a GTP-dependent manner. This chain is Elongation factor 4, found in Sphingopyxis alaskensis (strain DSM 13593 / LMG 18877 / RB2256) (Sphingomonas alaskensis).